Reading from the N-terminus, the 553-residue chain is CTP synthase (553 aa).

The segment at 1 to 270 is amidoligase domain; sequence MTKFVFVTGG…DRIICEELRI (270 aa). Serine 13 is a binding site for CTP. Serine 13 is a binding site for UTP. ATP is bound by residues 14-19 and aspartate 71; that span reads SLGKGI. Mg(2+) is bound by residues aspartate 71 and glutamate 144. CTP contacts are provided by residues 151 to 153, 191 to 196, and lysine 227; these read DIE and KTKPTQ. UTP contacts are provided by residues 191–196 and lysine 227; that span reads KTKPTQ. A Glutamine amidotransferase type-1 domain is found at 295–547; it reads TIGMVGKYVD…VEAALAHQQN (253 aa). An L-glutamine-binding site is contributed by glycine 356. Cysteine 383 serves as the catalytic Nucleophile; for glutamine hydrolysis. L-glutamine-binding positions include 384–387, glutamate 407, and arginine 473; that span reads LGMQ. Active-site residues include histidine 520 and glutamate 522.

This sequence belongs to the CTP synthase family. Homotetramer.

It carries out the reaction UTP + L-glutamine + ATP + H2O = CTP + L-glutamate + ADP + phosphate + 2 H(+). It catalyses the reaction L-glutamine + H2O = L-glutamate + NH4(+). The catalysed reaction is UTP + NH4(+) + ATP = CTP + ADP + phosphate + 2 H(+). Its pathway is pyrimidine metabolism; CTP biosynthesis via de novo pathway; CTP from UDP: step 2/2. Its activity is regulated as follows. Allosterically activated by GTP, when glutamine is the substrate; GTP has no effect on the reaction when ammonia is the substrate. The allosteric effector GTP functions by stabilizing the protein conformation that binds the tetrahedral intermediate(s) formed during glutamine hydrolysis. Inhibited by the product CTP, via allosteric rather than competitive inhibition. Functionally, catalyzes the ATP-dependent amination of UTP to CTP with either L-glutamine or ammonia as the source of nitrogen. Regulates intracellular CTP levels through interactions with the four ribonucleotide triphosphates. The polypeptide is CTP synthase (Ralstonia pickettii (strain 12J)).